Consider the following 251-residue polypeptide: Protein PBMUCL2 (251 aa).

The N-terminal stretch at 1 to 22 (MPRYVPLLLLLLLLRCSERGGG) is a signal peptide. Disordered regions lie at residues 36–55 (WRDGVRVPGEGASWDSDRAS) and 65–251 (LSQS…THLL). The span at 72–87 (KHPETSPKDSRIREND) shows a compositional bias: basic and acidic residues. An N-linked (GlcNAc...) asparagine glycan is attached at Asn120. Residues 150–164 (TKDSVTADPGTTENF) show a composition bias toward polar residues. The 15 X 11 AA approximate repeats stretch occupies residues 153-251 (SVTADPGTTE…TTKHGDTHLL (99 aa)). A compositionally biased stretch (basic and acidic residues) spans 241 to 251 (ETTKHGDTHLL).

In terms of tissue distribution, detected in the brain, lung, spleen, thymus and prostate.

Its subcellular location is the secreted. The protein is Protein PBMUCL2 (HCG22) of Homo sapiens (Human).